The sequence spans 370 residues: 3-isopropylmalate dehydrogenase (370 aa).

Residue 77 to 90 (GAKWDGVPYEARPE) coordinates NAD(+). Substrate is bound by residues Arg97, Arg107, Arg135, and Asp226. Mg(2+)-binding residues include Asp226, Asp250, and Asp254. Residue 290 to 302 (GSAPDIAGKGLAN) participates in NAD(+) binding.

Belongs to the isocitrate and isopropylmalate dehydrogenases family. LeuB type 1 subfamily. As to quaternary structure, homodimer. Mg(2+) serves as cofactor. Requires Mn(2+) as cofactor.

The protein resides in the cytoplasm. It carries out the reaction (2R,3S)-3-isopropylmalate + NAD(+) = 4-methyl-2-oxopentanoate + CO2 + NADH. The protein operates within amino-acid biosynthesis; L-leucine biosynthesis; L-leucine from 3-methyl-2-oxobutanoate: step 3/4. Functionally, catalyzes the oxidation of 3-carboxy-2-hydroxy-4-methylpentanoate (3-isopropylmalate) to 3-carboxy-4-methyl-2-oxopentanoate. The product decarboxylates to 4-methyl-2 oxopentanoate. The polypeptide is 3-isopropylmalate dehydrogenase (Rhodopseudomonas palustris (strain BisB18)).